Reading from the N-terminus, the 236-residue chain is Small ribosomal subunit protein bS21m (236 aa).

Residues 65–136 (KPAAGAAAGG…SSKPSPMQTW (72 aa)) form a disordered region. The segment covering 107 to 131 (SNSSTSSSSSSSSSGGALYSSSKPS) has biased composition (low complexity).

Belongs to the bacterial ribosomal protein bS21 family. As to quaternary structure, component of the mitochondrial small ribosomal subunit (mt-SSU). Mature N.crassa 74S mitochondrial ribosomes consist of a small (37S) and a large (54S) subunit. The 37S small subunit contains a 16S ribosomal RNA (16S mt-rRNA) and 32 different proteins. The 54S large subunit contains a 23S rRNA (23S mt-rRNA) and 42 different proteins.

The protein resides in the mitochondrion. In terms of biological role, component of the mitochondrial ribosome (mitoribosome), a dedicated translation machinery responsible for the synthesis of mitochondrial genome-encoded proteins, including at least some of the essential transmembrane subunits of the mitochondrial respiratory chain. The mitoribosomes are attached to the mitochondrial inner membrane and translation products are cotranslationally integrated into the membrane. The polypeptide is Small ribosomal subunit protein bS21m (mrp21) (Neurospora crassa (strain ATCC 24698 / 74-OR23-1A / CBS 708.71 / DSM 1257 / FGSC 987)).